Consider the following 287-residue polypeptide: Putative glutamate--cysteine ligase regulatory subunit (287 aa).

Belongs to the aldo/keto reductase family. Glutamate--cysteine ligase light chain subfamily. In terms of assembly, heterodimer of a catalytic heavy chain and a regulatory light chain.

It is found in the cytoplasm. The protein operates within sulfur metabolism; glutathione biosynthesis; glutathione from L-cysteine and L-glutamate: step 1/2. The chain is Putative glutamate--cysteine ligase regulatory subunit from Schizosaccharomyces pombe (strain 972 / ATCC 24843) (Fission yeast).